A 1613-amino-acid polypeptide reads, in one-letter code: Vitellogenin-2 (1613 aa).

Residues 1–15 form the signal peptide; sequence MRSIIIASLVALALA. Positions 24-687 constitute a Vitellogenin domain; that stretch reads FEPKTDYHYK…EKNSFLPKDL (664 aa). Asn-1268 carries N-linked (GlcNAc...) asparagine glycosylation. A VWFD domain is found at 1308–1477; it reads SVCKVQKNQI…SYLLKNEECE (170 aa). Intrachain disulfides connect Cys-1310–Cys-1440 and Cys-1332–Cys-1476. The tract at residues 1491 to 1531 is disordered; the sequence is KYERDEEQSDEYSSEETYDYEQENTKKSQKNQRSQKKSDLV. Positions 1495–1512 are enriched in acidic residues; sequence DEEQSDEYSSEETYDYEQ.

As to expression, expressed in the intestine of adult hermaphrodites.

The protein localises to the secreted. Functionally, precursor of the egg-yolk proteins that are sources of nutrients during embryonic development. Together with other vitellogenins, may play a role in modulating life-span, acting via induction of autophagy and lysosomal lipolysis. This Caenorhabditis elegans protein is Vitellogenin-2 (vit-2).